The primary structure comprises 299 residues: Oxygen-dependent coproporphyrinogen-III oxidase (299 aa).

A substrate-binding site is contributed by Ser-92. Residues His-96 and His-106 each contribute to the a divalent metal cation site. His-106 functions as the Proton donor in the catalytic mechanism. 108–110 (NVR) serves as a coordination point for substrate. A divalent metal cation is bound by residues His-145 and His-175. The segment at 240 to 275 (YVEFNLVWDRGTLFGLQTGGRTESILMSMPPLVRWE) is important for dimerization. 258-260 (GGR) is a binding site for substrate.

Belongs to the aerobic coproporphyrinogen-III oxidase family. Homodimer. It depends on a divalent metal cation as a cofactor.

It is found in the cytoplasm. The enzyme catalyses coproporphyrinogen III + O2 + 2 H(+) = protoporphyrinogen IX + 2 CO2 + 2 H2O. Its pathway is porphyrin-containing compound metabolism; protoporphyrin-IX biosynthesis; protoporphyrinogen-IX from coproporphyrinogen-III (O2 route): step 1/1. Its function is as follows. Involved in the heme biosynthesis. Catalyzes the aerobic oxidative decarboxylation of propionate groups of rings A and B of coproporphyrinogen-III to yield the vinyl groups in protoporphyrinogen-IX. This is Oxygen-dependent coproporphyrinogen-III oxidase from Shigella dysenteriae serotype 1 (strain Sd197).